The sequence spans 894 residues: Exocyst complex component 2 (894 aa).

Positions 5–89 (PVVTGLSPKE…GTSTVQFRAY (85 aa)) constitute an IPT/TIG domain. Residues 398–413 (HTSKDSGAQEKAKNRD) are compositionally biased toward basic and acidic residues. Residues 398–417 (HTSKDSGAQEKAKNRDSSQA) form a disordered region.

This sequence belongs to the SEC5 family. The exocyst complex is composed of Sec3/Exoc1, Sec5/Exoc2, Sec6/Exoc3, Sec8/Exoc4, Sec10/Exoc5, Sec15/Exoc6, Exo70/Exoc7 and Exo84/Exoc8.

Component of the exocyst complex involved in the docking of exocytic vesicles with fusion sites on the plasma membrane. The sequence is that of Exocyst complex component 2 from Drosophila melanogaster (Fruit fly).